Here is a 383-residue protein sequence, read N- to C-terminus: 8-amino-7-oxononanoate synthase (383 aa).

Arginine 23 contacts substrate. Glycine 110–phenylalanine 111 lines the pyridoxal 5'-phosphate pocket. Histidine 135 contributes to the substrate binding site. Residues serine 181, histidine 209, and threonine 235 each coordinate pyridoxal 5'-phosphate. Lysine 238 is modified (N6-(pyridoxal phosphate)lysine). A substrate-binding site is contributed by threonine 351.

Belongs to the class-II pyridoxal-phosphate-dependent aminotransferase family. BioF subfamily. In terms of assembly, homodimer. It depends on pyridoxal 5'-phosphate as a cofactor.

It catalyses the reaction 6-carboxyhexanoyl-[ACP] + L-alanine + H(+) = (8S)-8-amino-7-oxononanoate + holo-[ACP] + CO2. Its pathway is cofactor biosynthesis; biotin biosynthesis. In terms of biological role, catalyzes the decarboxylative condensation of pimeloyl-[acyl-carrier protein] and L-alanine to produce 8-amino-7-oxononanoate (AON), [acyl-carrier protein], and carbon dioxide. This Aliivibrio salmonicida (strain LFI1238) (Vibrio salmonicida (strain LFI1238)) protein is 8-amino-7-oxononanoate synthase.